A 346-amino-acid chain; its full sequence is Probable alcohol dehydrogenase AdhA (346 aa).

7 residues coordinate Zn(2+): Cys-51, His-73, Cys-109, Cys-112, Cys-115, Cys-123, and Cys-165.

The protein belongs to the zinc-containing alcohol dehydrogenase family. Zn(2+) serves as cofactor.

The enzyme catalyses a primary alcohol + NAD(+) = an aldehyde + NADH + H(+). It carries out the reaction a secondary alcohol + NAD(+) = a ketone + NADH + H(+). The sequence is that of Probable alcohol dehydrogenase AdhA (adhA) from Mycobacterium tuberculosis (strain CDC 1551 / Oshkosh).